Here is a 1018-residue protein sequence, read N- to C-terminus: Isoleucine--tRNA ligase (1018 aa).

The 'HIGH' region signature appears at 43–53; that stretch reads PYTTGRIHLGT. The 'KMSKS' region signature appears at 586-590; sequence KMSKS. Residue Lys-589 participates in ATP binding.

This sequence belongs to the class-I aminoacyl-tRNA synthetase family. IleS type 2 subfamily. Monomer. The cofactor is Zn(2+).

It is found in the cytoplasm. It catalyses the reaction tRNA(Ile) + L-isoleucine + ATP = L-isoleucyl-tRNA(Ile) + AMP + diphosphate. In terms of biological role, catalyzes the attachment of isoleucine to tRNA(Ile). As IleRS can inadvertently accommodate and process structurally similar amino acids such as valine, to avoid such errors it has two additional distinct tRNA(Ile)-dependent editing activities. One activity is designated as 'pretransfer' editing and involves the hydrolysis of activated Val-AMP. The other activity is designated 'posttransfer' editing and involves deacylation of mischarged Val-tRNA(Ile). This is Isoleucine--tRNA ligase from Archaeoglobus fulgidus (strain ATCC 49558 / DSM 4304 / JCM 9628 / NBRC 100126 / VC-16).